A 594-amino-acid chain; its full sequence is ATP-dependent lipid A-core flippase (594 aa).

The next 6 membrane-spanning stretches (helical) occupy residues phenylalanine 35–valine 55, phenylalanine 64–leucine 84, alanine 135–valine 155, valine 161–valine 181, valine 262–alanine 282, and isoleucine 289–leucine 309. One can recognise an ABC transmembrane type-1 domain in the interval valine 36–arginine 318. The 239-residue stretch at leucine 350–isoleucine 588 folds into the ABC transporter domain. Residue glycine 384–threonine 391 participates in ATP binding.

The protein belongs to the ABC transporter superfamily. Lipid exporter (TC 3.A.1.106) family. As to quaternary structure, homodimer.

It is found in the cell inner membrane. It catalyses the reaction ATP + H2O + lipid A-core oligosaccharideSide 1 = ADP + phosphate + lipid A-core oligosaccharideSide 2.. Functionally, involved in lipopolysaccharide (LPS) biosynthesis. Translocates lipid A-core from the inner to the outer leaflet of the inner membrane. Transmembrane domains (TMD) form a pore in the inner membrane and the ATP-binding domain (NBD) is responsible for energy generation. This chain is ATP-dependent lipid A-core flippase, found in Cupriavidus metallidurans (strain ATCC 43123 / DSM 2839 / NBRC 102507 / CH34) (Ralstonia metallidurans).